Here is a 291-residue protein sequence, read N- to C-terminus: Elongation factor Ts, mitochondrial (291 aa).

Belongs to the EF-Ts family.

The protein resides in the mitochondrion. In terms of biological role, associates with the EF-Tu.GDP complex and induces the exchange of GDP to GTP. It remains bound to the aminoacyl-tRNA.EF-Tu.GTP complex up to the GTP hydrolysis stage on the ribosome. The polypeptide is Elongation factor Ts, mitochondrial (Nematostella vectensis (Starlet sea anemone)).